The primary structure comprises 536 residues: Phosphoenolpyruvate carboxykinase (ATP) (536 aa).

The substrate site is built by Arg61, Tyr195, and Lys201. ATP contacts are provided by residues Lys201, His220, and 236–244; that span reads GLSGTGKTT. 2 residues coordinate Mn(2+): Lys201 and His220. Residue Asp257 coordinates Mn(2+). Glu285, Arg322, and Thr447 together coordinate ATP. Arg322 contacts substrate.

The protein belongs to the phosphoenolpyruvate carboxykinase (ATP) family. Mn(2+) serves as cofactor.

The protein localises to the cytoplasm. The enzyme catalyses oxaloacetate + ATP = phosphoenolpyruvate + ADP + CO2. It functions in the pathway carbohydrate biosynthesis; gluconeogenesis. In terms of biological role, involved in the gluconeogenesis. Catalyzes the conversion of oxaloacetate (OAA) to phosphoenolpyruvate (PEP) through direct phosphoryl transfer between the nucleoside triphosphate and OAA. This Sinorhizobium medicae (strain WSM419) (Ensifer medicae) protein is Phosphoenolpyruvate carboxykinase (ATP).